We begin with the raw amino-acid sequence, 329 residues long: DNA-directed RNA polymerase subunit alpha (329 aa).

Residues 1-235 (MQGSVTEFLK…EQLDAFVDLR (235 aa)) are alpha N-terminal domain (alpha-NTD). Residues 249-329 (FDPILLRPVD…NWPPASIAED (81 aa)) are alpha C-terminal domain (alpha-CTD).

This sequence belongs to the RNA polymerase alpha chain family. Homodimer. The RNAP catalytic core consists of 2 alpha, 1 beta, 1 beta' and 1 omega subunit. When a sigma factor is associated with the core the holoenzyme is formed, which can initiate transcription.

The enzyme catalyses RNA(n) + a ribonucleoside 5'-triphosphate = RNA(n+1) + diphosphate. In terms of biological role, DNA-dependent RNA polymerase catalyzes the transcription of DNA into RNA using the four ribonucleoside triphosphates as substrates. The protein is DNA-directed RNA polymerase subunit alpha of Pasteurella multocida (strain Pm70).